The sequence spans 239 residues: 2,3,4,5-tetrahydropyridine-2,6-dicarboxylate N-acetyltransferase (239 aa).

The protein belongs to the transferase hexapeptide repeat family. DapH subfamily.

The catalysed reaction is (S)-2,3,4,5-tetrahydrodipicolinate + acetyl-CoA + H2O = L-2-acetamido-6-oxoheptanedioate + CoA. Its pathway is amino-acid biosynthesis; L-lysine biosynthesis via DAP pathway; LL-2,6-diaminopimelate from (S)-tetrahydrodipicolinate (acetylase route): step 1/3. Functionally, catalyzes the transfer of an acetyl group from acetyl-CoA to tetrahydrodipicolinate. The sequence is that of 2,3,4,5-tetrahydropyridine-2,6-dicarboxylate N-acetyltransferase from Staphylococcus aureus (strain JH9).